Here is a 352-residue protein sequence, read N- to C-terminus: Small ribosomal subunit biogenesis GTPase RsgA (352 aa).

Residues 109–277 (DTVLKRPDMY…LIDSPGIREF (169 aa)) form the CP-type G domain. GTP is bound by residues 165–168 (NKAD) and 219–227 (GQSGVGKSS). Zn(2+)-binding residues include Cys301, Cys306, His308, and Cys314.

The protein belongs to the TRAFAC class YlqF/YawG GTPase family. RsgA subfamily. In terms of assembly, monomer. Associates with 30S ribosomal subunit, binds 16S rRNA. Zn(2+) is required as a cofactor.

It localises to the cytoplasm. Functionally, one of several proteins that assist in the late maturation steps of the functional core of the 30S ribosomal subunit. Helps release RbfA from mature subunits. May play a role in the assembly of ribosomal proteins into the subunit. Circularly permuted GTPase that catalyzes slow GTP hydrolysis, GTPase activity is stimulated by the 30S ribosomal subunit. This Alcanivorax borkumensis (strain ATCC 700651 / DSM 11573 / NCIMB 13689 / SK2) protein is Small ribosomal subunit biogenesis GTPase RsgA.